The sequence spans 251 residues: Adenosine 5'-phosphosulfate reductase (251 aa).

4 residues coordinate [4Fe-4S] cluster: Cys121, Cys122, Cys204, and Cys207. The Nucleophile; cysteine thiosulfonate intermediate role is filled by Cys232.

Belongs to the PAPS reductase family. CysH subfamily. Requires [4Fe-4S] cluster as cofactor.

It is found in the cytoplasm. It carries out the reaction [thioredoxin]-disulfide + sulfite + AMP + 2 H(+) = adenosine 5'-phosphosulfate + [thioredoxin]-dithiol. The protein operates within sulfur metabolism; hydrogen sulfide biosynthesis; sulfite from sulfate. Its function is as follows. Catalyzes the formation of sulfite from adenosine 5'-phosphosulfate (APS) using thioredoxin as an electron donor. This chain is Adenosine 5'-phosphosulfate reductase, found in Sinorhizobium fredii (strain NBRC 101917 / NGR234).